The primary structure comprises 449 residues: Putative gustatory receptor 77a (449 aa).

The Cytoplasmic segment spans residues 1–27 (MPLPLGDPLALAVSPQLGYIRITAMPR). Residues 28–50 (WLQLPGMSALGILYSLTRVFGLM) traverse the membrane as a helical segment. Topologically, residues 51–70 (ATANWSPRGIKRVRQSLYLR) are extracellular. The chain crosses the membrane as a helical span at residues 71–93 (IHGCVMLIFVGCFSPFAFWCIFQ). At 94 to 102 (RMAFLRQNR) the chain is on the cytoplasmic side. The chain crosses the membrane as a helical span at residues 103–125 (ILLMIGFNRYVLLLVCAFMTLWI). At 126 to 205 (HCFKQAEIIG…VRRNFMYACS (80 aa)) the chain is on the extracellular side. A helical membrane pass occupies residues 206-228 (LVFVSVCQAILQLSLGMYTMAIL). Residues 229-298 (FLGHLVRHSN…LLKLHRSICS (70 aa)) lie on the Cytoplasmic side of the membrane. The chain crosses the membrane as a helical span at residues 299 to 321 (LCAVQAVCFLGFVPLECTIHLFF). Over 322–340 (TYFMKYSKFILRKYGRSFP) the chain is Extracellular. Residues 341–363 (LNYFAIAFLVGLFTNLLLVILPT) traverse the membrane as a helical segment. At 364 to 420 (YYSERRFNCTREIIKGGGLAFPSRITVKQLRHTMHFYGLYLKNVEHVFAVSACGLFK) the chain is on the cytoplasmic side. Residues 421–443 (LNNAILFCIVGAILEYLMILIQF) traverse the membrane as a helical segment. The Extracellular segment spans residues 444–449 (DKVLNK).

It belongs to the insect chemoreceptor superfamily. Gustatory receptor (GR) family. Gr77a subfamily. As to expression, in larvae, is expressed in dorsal pharyngeal sense organ.

The protein localises to the cell membrane. Functionally, probable gustatory receptor which mediates acceptance or avoidance behavior, depending on its substrates. The polypeptide is Putative gustatory receptor 77a (Gr77a) (Drosophila melanogaster (Fruit fly)).